We begin with the raw amino-acid sequence, 163 residues long: Phosphopantetheine adenylyltransferase (163 aa).

Thr-11 contributes to the substrate binding site. ATP is bound by residues 11-12 (TF) and His-19. Substrate-binding residues include Lys-43, Leu-75, and Arg-89. ATP contacts are provided by residues 90–92 (GLR), Glu-100, and 125–131 (YSFISST).

It belongs to the bacterial CoaD family. Homohexamer. Requires Mg(2+) as cofactor.

It localises to the cytoplasm. It catalyses the reaction (R)-4'-phosphopantetheine + ATP + H(+) = 3'-dephospho-CoA + diphosphate. It participates in cofactor biosynthesis; coenzyme A biosynthesis; CoA from (R)-pantothenate: step 4/5. Reversibly transfers an adenylyl group from ATP to 4'-phosphopantetheine, yielding dephospho-CoA (dPCoA) and pyrophosphate. This chain is Phosphopantetheine adenylyltransferase, found in Acinetobacter baumannii (strain ACICU).